Reading from the N-terminus, the 321-residue chain is Olfactory receptor 51V1 (321 aa).

At 1 to 34 the chain is on the extracellular side; sequence MFLSSRMITSVSPSTSTNSSFLLTGFSGMEQQYP. Asparagine 18 is a glycosylation site (N-linked (GlcNAc...) asparagine). A helical membrane pass occupies residues 35–55; sequence WLSIPFSSIYAMVLLGNCMVL. The Cytoplasmic portion of the chain corresponds to 56–63; the sequence is HVIWTEPS. A helical transmembrane segment spans residues 64 to 84; that stretch reads LHQPMFYFLSMLALTDLCMGL. Residues 85 to 108 are Extracellular-facing; the sequence is STVYTVLGILWGIIREISLDSCIA. A disulfide bond links cysteine 106 and cysteine 188. Residues 109–129 form a helical membrane-spanning segment; the sequence is QSYFIHGLSFMESSVLLTMAF. At 130–148 the chain is on the cytoplasmic side; it reads DRYIAICNPLRYSSILTNS. The helical transmembrane segment at 149–169 threads the bilayer; the sequence is RIIKIGLTIIGRSFFFITPPI. The Extracellular segment spans residues 170–205; that stretch reads ICLKFFNYCHFHILSHSFCLHQDLLRLACSDIRFNS. The chain crosses the membrane as a helical span at residues 206–226; sequence YYALMLVICILLLDAILILFS. Topologically, residues 227 to 246 are cytoplasmic; the sequence is YILILKSVLAVASQEERHKL. A helical transmembrane segment spans residues 247-267; the sequence is FQTCISHICAVLVFYIPIISL. Over 268–282 the chain is Extracellular; sequence TMVHRFGKHLSPVAH. Residues 283 to 303 traverse the membrane as a helical segment; the sequence is VLIGNIYILFPPLMNPIIYSV. Topologically, residues 304-321 are cytoplasmic; the sequence is KTQQIHTRMLRLFSLKRY.

The protein belongs to the G-protein coupled receptor 1 family.

The protein localises to the cell membrane. Its function is as follows. Odorant receptor. The chain is Olfactory receptor 51V1 (OR51V1) from Homo sapiens (Human).